We begin with the raw amino-acid sequence, 258 residues long: Apolipoprotein E (258 aa).

The signal sequence occupies residues 1 to 19 (MRVWTVLLGAVLLLAACQA). 3 repeat units span residues 112–133 (VDME…QVAG), 134–155 (QNLE…KRLA), and 156–173 (KDTE…KEAT). The segment at 112 to 173 (VDMEEAKTRV…KLEAYSKEAT (62 aa)) is 3 X 22 AA approximate tandem repeats.

Belongs to the apolipoprotein A1/A4/E family. In terms of assembly, homotetramer.

The protein resides in the secreted. It localises to the extracellular space. Its subcellular location is the extracellular matrix. APOE is an apolipoprotein, a protein associating with lipid particles, that mainly functions in lipoprotein-mediated lipid transport between organs via the plasma and interstitial fluids. APOE is a core component of plasma lipoproteins and is involved in their production, conversion and clearance. Apolipoproteins are amphipathic molecules that interact both with lipids of the lipoprotein particle core and the aqueous environment of the plasma. This chain is Apolipoprotein E (APOE), found in Alligator mississippiensis (American alligator).